A 439-amino-acid chain; its full sequence is Probable aspartic proteinase GIP2 (439 aa).

The first 23 residues, 1–23 (MASSCCLHAILLCSLLFITSTTA), serve as a signal peptide directing secretion. The region spanning 47-420 (YLTQIQQRTP…DLARSRLGFT (374 aa)) is the Peptidase A1 domain. Residues Asn116, Asn280, Asn323, and Asn434 are each glycosylated (N-linked (GlcNAc...) asparagine).

This sequence belongs to the peptidase A1 family. Interacts with the Phytophtora parasitica xyloglucanase XEG1 and xyloglucanase-like XLP1. Possesses stronger binding affinity with XLP1, a truncated paralog of P.parasitica XEG1 which has no enzyme activity.

The protein localises to the secreted. It localises to the extracellular space. Its subcellular location is the apoplast. In terms of biological role, involved in plant defense against Phytophtora parasitica. Contributes positively to Nicotiana resistance against P.parasitica. Binds the P.parasitica xyloglucanase XEG1 and inhibits its cell wall degrading enzyme activity and its contribution as P.parasitica virulence factor. XEG1 acts as an important virulence factor during P.parasitica infection but also acts as a pathogen-associated molecular pattern (PAMP) in Nictotiana species, where it can trigger defense responses including cell death. Functionally, (Microbial infection) Possesses stronger binding affinity with XLP1, a truncated paralog of P.parasitica XEG1 which has no enzyme activity. Is impaired in its inhibitor activity towards the P.parasitica xyloglucanase XEG1 when hijacked by XLP1 binding. In Nicotiana benthamiana, this protein is Probable aspartic proteinase GIP2.